The primary structure comprises 250 residues: V-type proton ATPase subunit D (250 aa).

Belongs to the V-ATPase D subunit family. V-ATPase is a heteromultimeric enzyme made up of two complexes: the ATP-hydrolytic V1 complex and the proton translocation V0 complex. The V1 complex consists of three catalytic AB heterodimers that form a heterohexamer, three peripheral stalks each consisting of EG heterodimers, one central rotor including subunits D and F, and the regulatory subunits C and H. The proton translocation complex V0 consists of the proton transport subunit a, a ring of proteolipid subunits c9c'', rotary subunit d, subunits e and f, and two accessory subunits ATP6AP1/Ac45 and ATP6AP2/PRR.

Subunit of the V1 complex of vacuolar(H+)-ATPase (V-ATPase), a multisubunit enzyme composed of a peripheral complex (V1) that hydrolyzes ATP and a membrane integral complex (V0) that translocates protons. V-ATPase is responsible for acidifying and maintaining the pH of intracellular compartments and in some cell types, is targeted to the plasma membrane, where it is responsible for acidifying the extracellular environment. In Suberites domuncula (Sponge), this protein is V-type proton ATPase subunit D (VATPD).